Reading from the N-terminus, the 531-residue chain is Aspartate--tRNA ligase, cytoplasmic (531 aa).

Positions 1–45 (MADAAEGEQPKLSKKELNKLARKAKKDEKAGEKGGNQQQAAAMDQ) are disordered. Basic and acidic residues predominate over residues 8–32 (EQPKLSKKELNKLARKAKKDEKAGE). Residue Glu-259 coordinates L-aspartate. Positions 281 to 284 (QLYK) are aspartate. Arg-303 lines the L-aspartate pocket. ATP-binding positions include 303-305 (RAE), 311-313 (RHM), and Glu-454. Residues Ser-457 and Arg-461 each coordinate L-aspartate. 502 to 505 (GLER) serves as a coordination point for ATP.

Belongs to the class-II aminoacyl-tRNA synthetase family. Type 2 subfamily. As to quaternary structure, homodimer.

The protein localises to the cytoplasm. It carries out the reaction tRNA(Asp) + L-aspartate + ATP = L-aspartyl-tRNA(Asp) + AMP + diphosphate. The chain is Aspartate--tRNA ligase, cytoplasmic from Caenorhabditis elegans.